Here is a 1158-residue protein sequence, read N- to C-terminus: ATP-dependent helicase/deoxyribonuclease subunit B (1158 aa).

8-15 provides a ligand contact to ATP; it reads GRAGTGKS. [4Fe-4S] cluster-binding residues include C791, C1112, C1115, and C1121.

This sequence belongs to the helicase family. AddB/RexB type 1 subfamily. Heterodimer of AddA and AddB. Mg(2+) is required as a cofactor. [4Fe-4S] cluster serves as cofactor.

Its function is as follows. The heterodimer acts as both an ATP-dependent DNA helicase and an ATP-dependent, dual-direction single-stranded exonuclease. Recognizes the chi site generating a DNA molecule suitable for the initiation of homologous recombination. The AddB subunit has 5' -&gt; 3' nuclease activity but not helicase activity. In Clostridium perfringens (strain ATCC 13124 / DSM 756 / JCM 1290 / NCIMB 6125 / NCTC 8237 / Type A), this protein is ATP-dependent helicase/deoxyribonuclease subunit B.